The following is a 525-amino-acid chain: M-phase inducer phosphatase 1 (525 aa).

The short motif at 73–83 (MGSSESTDSGF) is the Phosphodegron element. At S75 the chain carries Phosphoserine; by CHEK1. Residues S78, S81, and S87 each carry the phosphoserine; by NEK11 modification. S106 bears the Phosphoserine mark. S123 bears the Phosphoserine; by CHEK1 and CHEK2 mark. The KEN box motif lies at 140 to 142 (KEN). S177 is modified (phosphoserine; by CHEK1). Disordered stretches follow at residues 179–204 (PARM…PQSP) and 262–308 (SASC…PEKP). Phosphoserine; by CHEK1 and CHEK2 occurs at positions 279 and 293. The span at 294 to 306 (VAGASPEEAASPE) shows a compositional bias: low complexity. S322 is subject to Phosphoserine. A Rhodanese domain is found at 377–483 (LIKEFVIIDC…FFLKCQSHCE (107 aa)). C432 is an active-site residue. A Phosphothreonine; by CHEK1 modification is found at T508. Residues S514 and S520 each carry the phosphoserine; by PLK3 modification.

This sequence belongs to the MPI phosphatase family. In terms of assembly, interacts with CCNB1/cyclin B1. Interacts with YWHAE/14-3-3 epsilon when phosphorylated. Interacts with CUL1 specifically when CUL1 is neddylated and active. Interacts with BTRC/BTRCP1 and FBXW11/BTRCP2. Interactions with CUL1, BTRC and FBXW11 are enhanced upon DNA damage. Interacts with HSP90AB1; prevents heat shock-mediated CDC25A degradation and contributes to cell cycle progression. In terms of processing, phosphorylated by CHEK1 on Ser-75, Ser-123, Ser-177, Ser-279, Ser-293 and Thr-508 during checkpoint mediated cell cycle arrest. Also phosphorylated by CHEK2 on Ser-123, Ser-279, and Ser-293 during checkpoint mediated cell cycle arrest. Phosphorylation on Ser-177 and Thr-508 creates binding sites for YWHAE/14-3-3 epsilon which inhibits CDC25A. Phosphorylation on Ser-75, Ser-123, Ser-177, Ser-279 and Ser-293 may also promote ubiquitin-dependent proteolysis of CDC25A by the SCF complex. Phosphorylation of CDC25A at Ser-75 by CHEK1 primes it for subsequent phosphorylation at Ser-78, Ser-81 and Ser-87 by NEK11. Phosphorylation by NEK11 is required for BTRC-mediated polyubiquitination and degradation. Phosphorylation by PIM1 leads to an increase in phosphatase activity. Phosphorylated by PLK3 following DNA damage, leading to promote its ubiquitination and degradation. Ubiquitinated by the anaphase promoting complex/cyclosome (APC/C) ubiquitin ligase complex that contains FZR1/CDH1 during G1 phase leading to its degradation by the proteasome. Ubiquitinated by a SCF complex containing BTRC and FBXW11 during S phase leading to its degradation by the proteasome. Deubiquitination by USP17L2/DUB3 leads to its stabilization.

The catalysed reaction is O-phospho-L-tyrosyl-[protein] + H2O = L-tyrosyl-[protein] + phosphate. Its activity is regulated as follows. Stimulated by B-type cyclins. Stimulated by PIM1-mediated phosphorylation. Tyrosine protein phosphatase which functions as a dosage-dependent inducer of mitotic progression. Directly dephosphorylates CDK1 and stimulates its kinase activity. Also dephosphorylates CDK2 in complex with cyclin-E, in vitro. This is M-phase inducer phosphatase 1 (CDC25A) from Bos taurus (Bovine).